Consider the following 253-residue polypeptide: Probable transcriptional regulatory protein TM_0466 (253 aa).

Belongs to the TACO1 family.

It is found in the cytoplasm. This Thermotoga maritima (strain ATCC 43589 / DSM 3109 / JCM 10099 / NBRC 100826 / MSB8) protein is Probable transcriptional regulatory protein TM_0466.